A 565-amino-acid polypeptide reads, in one-letter code: Periplasmic trehalase (565 aa).

The N-terminal stretch at 1-30 is a signal peptide; sequence MKSPAPSRPQKMALIPACIFLCFAALSVQA. Substrate is bound by residues arginine 152, 159–160, asparagine 196, 205–207, 277–279, and glycine 310; these read WD, RSQ, and RPE. Catalysis depends on proton donor/acceptor residues aspartate 312 and glutamate 496. Residue glutamate 511 participates in substrate binding. The interval 539 to 565 is disordered; sequence CDNVPATRPLSESTTQPLKQKEAEPTP.

This sequence belongs to the glycosyl hydrolase 37 family. Monomer.

It localises to the periplasm. It carries out the reaction alpha,alpha-trehalose + H2O = alpha-D-glucose + beta-D-glucose. Functionally, provides the cells with the ability to utilize trehalose at high osmolarity by splitting it into glucose molecules that can subsequently be taken up by the phosphotransferase-mediated uptake system. The chain is Periplasmic trehalase from Escherichia coli O1:K1 / APEC.